Consider the following 589-residue polypeptide: Kelch-like protein 25 (589 aa).

One can recognise a BTB domain in the interval 46–114; sequence TDVTLWAGNR…AYSSKIIINE (69 aa). In terms of domain architecture, BACK spans 149-250; it reads CLGMMILSDA…LPSELLKEAV (102 aa). Kelch repeat units follow at residues 296 to 340, 341 to 388, 389 to 444, 446 to 492, 493 to 538, and 539 to 585; these read TLLI…AIGC, KVYV…ELEN, CLYV…SAKL, LFAF…VLGS, QIFI…ASGN, and KVYV…STWK.

As to quaternary structure, component of the BCR(KLHL25) E3 ubiquitin ligase complex, at least composed of cul3, klhl25 and rbx1.

It participates in protein modification; protein ubiquitination. Functionally, substrate-specific adapter of a BCR (BTB-CUL3-RBX1) E3 ubiquitin ligase complex involved in various processes, such as translation homeostasis and lipid synthesis. The BCR(KLHL25) ubiquitin ligase complex acts by mediating ubiquitination of hypophosphorylated eif4ebp1 (4E-BP1): ubiquitination and subsequent degradation of hypophosphorylated EIF4EBP1 (4E-BP1) probably serves as a homeostatic mechanism to maintain translation and prevent eIF4E inhibition when eIF4E levels are low. The BCR(KLHL25) complex also acts as a regulator of lipid synthesis by mediating ubiquitination and degradation of ACLY, thereby inhibiting lipid synthesis. The chain is Kelch-like protein 25 from Xenopus tropicalis (Western clawed frog).